A 66-amino-acid chain; its full sequence is Large ribosomal subunit protein bL33c (66 aa).

As to quaternary structure, component of the chloroplast large ribosomal subunit (LSU). Mature 70S chloroplast ribosomes of higher plants consist of a small (30S) and a large (50S) subunit. The 30S small subunit contains 1 molecule of ribosomal RNA (16S rRNA) and 24 different proteins. The 50S large subunit contains 3 rRNA molecules (23S, 5S and 4.5S rRNA) and 33 different proteins.

It localises to the plastid. The protein localises to the chloroplast. In terms of biological role, component of the chloroplast ribosome (chloro-ribosome), a dedicated translation machinery responsible for the synthesis of chloroplast genome-encoded proteins, including proteins of the transcription and translation machinery and components of the photosynthetic apparatus. This is Large ribosomal subunit protein bL33c (rpl33) from Spinacia oleracea (Spinach).